Here is a 464-residue protein sequence, read N- to C-terminus: tRNA modification GTPase MnmE (464 aa).

(6S)-5-formyl-5,6,7,8-tetrahydrofolate is bound by residues R25, E87, and K130. The 161-residue stretch at G226 to G386 folds into the TrmE-type G domain. N236 is a K(+) binding site. Residues N236–S241, T255–T261, and D280–G283 each bind GTP. S240 contributes to the Mg(2+) binding site. K(+) contacts are provided by T255, I257, and T260. Residue T261 coordinates Mg(2+). K464 contributes to the (6S)-5-formyl-5,6,7,8-tetrahydrofolate binding site.

Belongs to the TRAFAC class TrmE-Era-EngA-EngB-Septin-like GTPase superfamily. TrmE GTPase family. Homodimer. Heterotetramer of two MnmE and two MnmG subunits. The cofactor is K(+).

It localises to the cytoplasm. Exhibits a very high intrinsic GTPase hydrolysis rate. Involved in the addition of a carboxymethylaminomethyl (cmnm) group at the wobble position (U34) of certain tRNAs, forming tRNA-cmnm(5)s(2)U34. This Burkholderia ambifaria (strain MC40-6) protein is tRNA modification GTPase MnmE.